The chain runs to 561 residues: GPI mannosyltransferase 3 (561 aa).

A run of 8 helical transmembrane segments spans residues 3-25 (LIYVFLLILAVRLASVFVVQTYY), 64-84 (IAGLYKILALLQLDSAHLLVV), 110-130 (WALFLILVPWFWFYTGSRTLA), 155-175 (LWPAAICCFLRPTAAVIWLPL), 195-215 (FVLIGLLVAGLGIAIDTYWHG), 246-266 (FSVGLPTVLGINTLPFIFGVM), 275-295 (YPVSKQLLITIFLTLVVLSAV), and 328-348 (TMLWTTALVILVGNVMPAWYL). 2 N-linked (GlcNAc...) asparagine glycosylation sites follow: Asn-398 and Asn-456. Residues 525-546 (ENAFNRGPDSGQHEPDVHDHPP) are disordered. The span at 535 to 546 (GQHEPDVHDHPP) shows a compositional bias: basic and acidic residues.

It belongs to the glycosyltransferase 22 family. PIGB subfamily.

Its subcellular location is the endoplasmic reticulum membrane. It participates in glycolipid biosynthesis; glycosylphosphatidylinositol-anchor biosynthesis. Mannosyltransferase involved in glycosylphosphatidylinositol-anchor biosynthesis. Transfers the third alpha-1,2-mannose to Man2-GlcN-acyl-PI during GPI precursor assembly. This chain is GPI mannosyltransferase 3, found in Drosophila melanogaster (Fruit fly).